Consider the following 392-residue polypeptide: Fasciculation and elongation protein zeta-1 (392 aa).

Residues 1 to 37 (MEAPLVSLDEEFEDLRPSCSEDPEEKPQCFYGSSPHH) form a disordered region. Position 58 is a phosphoserine (Ser-58). A disordered region spans residues 175-198 (MQNSPDPEEEEEVLEEEDGGETSS). The segment covering 180–194 (DPEEEEEVLEEEDGG) has biased composition (acidic residues). Residues 230 to 298 (SELTELLDQV…KKRRKEKGLS (69 aa)) adopt a coiled-coil conformation. Phosphoserine is present on residues Ser-298 and Ser-316.

This sequence belongs to the zygin family. As to quaternary structure, homodimer; disulfide-linked. May form heterodimers with FEZ2. Interacts with the NH2-terminal variable region (V1) of PKC zeta and weakly with that of PKC epsilon. Interacts with UBE4B. Interacts with SAP30L. Interacts with SCOC and ULK1; SCOC interferes with ULK1-binding to FEZ1. Directly interacts with SCOC and UVRAG. Stabilizes the interaction between SCOC and UVRAG during amino acid starvation. Post-translationally, phosphorylated by protein kinase C zeta; which enhances interaction with UBE4B and polyubiquitination. In terms of processing, polyubiquitinated in a UBE4B-dependent manner; which does not lead to proteasomal degradation and may be important for neurogenic activity. Polyubiquitin linkage seems to be mainly through Lys-26. As to expression, mainly expressed in brain.

It localises to the cytoplasm. Its subcellular location is the cytoskeleton. The protein resides in the microtubule organizing center. It is found in the centrosome. The protein localises to the cell membrane. May be involved in axonal outgrowth as component of the network of molecules that regulate cellular morphology and axon guidance machinery. Able to restore partial locomotion and axonal fasciculation to C.elegans unc-76 mutants in germline transformation experiments. May participate in the transport of mitochondria and other cargos along microtubules. The chain is Fasciculation and elongation protein zeta-1 (FEZ1) from Homo sapiens (Human).